We begin with the raw amino-acid sequence, 473 residues long: Monocarboxylate transporter 4 (473 aa).

Residues 1 to 17 are Cytoplasmic-facing; the sequence is MGAVVVDDGPSGVKAPD. A helical transmembrane segment spans residues 18-38; that stretch reads GGWGWAVLFGCFIITGFSYAF. The Extracellular segment spans residues 39–61; it reads PKAVSVFFKELIREFGVGYSDTA. The helical transmembrane segment at 62 to 82 threads the bilayer; the sequence is WISSILLAMLYGTGPLCSVCV. Residues 83–91 lie on the Cytoplasmic side of the membrane; sequence NRFGCRPVM. Residues 92–112 traverse the membrane as a helical segment; it reads LVGGLFASMGMVIASFCTSIV. The Extracellular segment spans residues 113–115; sequence QIY. The chain crosses the membrane as a helical span at residues 116–136; that stretch reads LTAGVITGLGLALNFQPSLIM. Over 137 to 149 the chain is Cytoplasmic; it reads LNRYFDKRRPLAN. The chain crosses the membrane as a helical span at residues 150–170; sequence GLSAAGSPVFLCALSPLGQIL. The Extracellular segment spans residues 171 to 179; sequence QHEYGWRGG. Residues 180–200 traverse the membrane as a helical segment; it reads FLILGGMLLNCCVCGALMRPL. Topologically, residues 201–231 are cytoplasmic; the sequence is EPPKKSEATKEPAEKKAKKKLLDFSVFKDGG. Residues 232 to 252 form a helical membrane-spanning segment; it reads FVIYTLAASIMVLGLFVPPVF. Residues 253-268 lie on the Extracellular side of the membrane; sequence VVSYAKDLGYQDTKAA. Residues 269–289 traverse the membrane as a helical segment; that stretch reads FLLTILGFIDIFARPICGMVA. Residues 290-297 are Cytoplasmic-facing; sequence GLKWVRPR. The chain crosses the membrane as a helical span at residues 298–318; that stretch reads CVYLFSFAMIFNGFTDLMGSM. Residues 319–321 lie on the Extracellular side of the membrane; that stretch reads SVD. The chain crosses the membrane as a helical span at residues 322–342; sequence YGGLVVFCIFFGISYGMVGAL. The Cytoplasmic portion of the chain corresponds to 343–358; sequence QFEVLMAIVGTQKFSS. Residues 359 to 379 form a helical membrane-spanning segment; the sequence is AIGLVLLAEAMAVLIGPPSAG. Residues 380–388 lie on the Extracellular side of the membrane; the sequence is KLLDLTRRY. The chain crosses the membrane as a helical span at residues 389–409; the sequence is MFVFIIAGIEVTTSALVLALG. The Cytoplasmic segment spans residues 410–473; it reads NFFCIKKKPA…EVVTNPETCV (64 aa). Residues 421–447 form a disordered region; the sequence is PHTKEAAAEREELNKSEDKTPEDAKVD. 2 basolateral sorting signal regions span residues 427–449 and 449–473; these read AAER…VDSI and IEVE…ETCV.

The protein belongs to the major facilitator superfamily. Monocarboxylate porter (TC 2.A.1.13) family. As to quaternary structure, interacts with BSG; interaction mediates SLC16A3 targeting to the plasma membrane.

It is found in the cell membrane. It localises to the basolateral cell membrane. It catalyses the reaction (S)-lactate(in) + H(+)(in) = (S)-lactate(out) + H(+)(out). The enzyme catalyses pyruvate(out) + H(+)(out) = pyruvate(in) + H(+)(in). Functionally, proton-dependent transporter of monocarboxylates such as L-lactate and pyruvate. Plays a predominant role in the L-lactate efflux from highly glycolytic cells. The polypeptide is Monocarboxylate transporter 4 (SLC16A3) (Gallus gallus (Chicken)).